The primary structure comprises 151 residues: MGRMHAPGKGISQSALPYRRSVPTWLKLTADDVKEQIFKLGKKGLTPSQIGVMLRDSHGVAQVRFVTGKKILRIMKAMGLAPDLPEDLYYLIKKAVAMGKHLERNRKDKDSKFRLILVESRIHRLARYYKTKSVLPPNWKYESSTASALVA.

This sequence belongs to the universal ribosomal protein uS15 family.

This chain is Small ribosomal subunit protein uS15 (RpS13), found in Plutella xylostella (Diamondback moth).